A 1008-amino-acid polypeptide reads, in one-letter code: Kinesin-like protein KIN-5C (1008 aa).

Residues 12 to 359 form the Kinesin motor domain; it reads NVQVLLRCRP…LDYAHRAKSI (348 aa). Position 98–105 (98–105) interacts with ATP; it reads GQTGTGKT. A coiled-coil region spans residues 402 to 459; sequence KDRYQQEENERKAMADQIEQMTTSLEANQKQINDLQEKYDSELQHSADLSKKLEATEK. Disordered stretches follow at residues 910 to 931, 943 to 962, and 975 to 1008; these read VEAHLGESQHLQESHSSHTAGI, YKDYEPTGETPVRSEPEVPS, and ESLMDEFRENHPYEPSKDRRPSLIPRSPLATINN. Positions 913 to 925 are enriched in basic and acidic residues; that stretch reads HLGESQHLQESHS. The segment covering 979–995 has biased composition (basic and acidic residues); sequence DEFRENHPYEPSKDRRP.

Belongs to the TRAFAC class myosin-kinesin ATPase superfamily. Kinesin family. KIN-5/BimC subfamily.

It localises to the cytoplasm. The protein resides in the cytoskeleton. Its subcellular location is the spindle. Responsible for microtubule translocation. May be important for the organization of phragmoplast-specific arrays of microtubules. Plays an essential role in stabilizing the mitotic spindle. Required during mitotic cytokinesis. In Oryza sativa subsp. japonica (Rice), this protein is Kinesin-like protein KIN-5C.